The sequence spans 150 residues: uncharacterized protein (150 aa).

The protein localises to the plastid. The protein resides in the chloroplast. This is an uncharacterized protein from Pyropia yezoensis (Susabi-nori).